We begin with the raw amino-acid sequence, 452 residues long: Rhodopsin (452 aa).

Topologically, residues 1-33 (MGRDIPDNETWWYNPYMDIHPHWKQFDQVPAAV) are extracellular. An N-linked (GlcNAc...) asparagine glycan is attached at N8. A helical membrane pass occupies residues 34-58 (YYSLGIFIAICGIIGCVGNGVVIYL). The Cytoplasmic portion of the chain corresponds to 59–70 (FTKTKSLQTPAN). The helical transmembrane segment at 71-97 (MFIINLAFSDFTFSLVNGFPLMTISCF) threads the bilayer. Residues 98–109 (MKYWVFGNAACK) lie on the Extracellular side of the membrane. Residues C108 and C186 are joined by a disulfide bond. A helical membrane pass occupies residues 110–131 (VYGLIGGIFGLMSIMTMTMISI). The 'Ionic lock' involved in activated form stabilization signature appears at 132–134 (DRY). Topologically, residues 132-151 (DRYNVIGRPMSASKKMSHRK) are cytoplasmic. Residues 152 to 172 (AFIMIIFVWIWSTIWAIGPIF) traverse the membrane as a helical segment. Topologically, residues 173–199 (GWGAYTLEGVLCNCSFDYITRDTTTRS) are extracellular. Residues 200–224 (NILCMYIFAFMCPIVVIFFCYFNIV) traverse the membrane as a helical segment. Residues 225–261 (MSVSNHEKEMAAMAKRLNAKELRKAQAGANAEMKLAK) lie on the Cytoplasmic side of the membrane. Residues 262-283 (ISIVIVTQFLLSWSPYAVVALL) traverse the membrane as a helical segment. The Extracellular portion of the chain corresponds to 284 to 293 (AQFGPIEWVT). Residues 294-315 (PYAAQLPVMFAKASAIHNPMIY) traverse the membrane as a helical segment. At K305 the chain carries N6-(retinylidene)lysine. The Cytoplasmic segment spans residues 316–452 (SVSHPKFRER…QGVDNQAYQA (137 aa)). Residues C336 and C337 are each lipidated (S-palmitoyl cysteine). Disordered stretches follow at residues 346-365 (DDKD…GETA) and 376-452 (MMQK…AYQA). The segment covering 376–388 (MMQKMQAQQQQQP) has biased composition (low complexity). The span at 389–440 (AYPPQGYPPQGYPPPPPQGYPPQGYPPQGYPPQGYPPPPQGPPPQGPPPQAA) shows a compositional bias: pro residues.

It belongs to the G-protein coupled receptor 1 family. Opsin subfamily. In terms of processing, contains one covalently linked retinal chromophore. Upon light absorption, the covalently bound 11-cis-retinal is converted to all-trans-retinal. After hydrolysis of the Schiff base and release of the covalently bound all-trans-retinal, active rhodopsin is regenerated by binding of a fresh molecule of 11-cis-retinal.

Its subcellular location is the cell projection. The protein resides in the rhabdomere membrane. Functionally, photoreceptor required for image-forming vision at low light intensity. Light-induced isomerization of 11-cis to all-trans retinal triggers a conformational change that activates signaling via G-proteins. Signaling mediates the activation of phospholipase C. Subsequent receptor phosphorylation mediates displacement of the bound G-protein alpha subunit by arrestin and terminates signaling. The protein is Rhodopsin (RHO) of Loligo forbesii (Veined squid).